The primary structure comprises 112 residues: Large ribosomal subunit protein P1 (112 aa).

Low complexity predominate over residues 71–90; the sequence is PAQAAAAAPAGGAPAAAAPA. Residues 71 to 112 are disordered; sequence PAQAAAAAPAGGAPAAAAPAESKEGRRSQGESDDDMGFGLLD. A compositionally biased stretch (basic and acidic residues) spans 91 to 100; it reads ESKEGRRSQG.

This sequence belongs to the eukaryotic ribosomal protein P1/P2 family. As to quaternary structure, P1 and P2 exist as dimers at the large ribosomal subunit.

Plays an important role in the elongation step of protein synthesis. The polypeptide is Large ribosomal subunit protein P1 (rpl-21) (Oscheius tipulae).